Here is an 858-residue protein sequence, read N- to C-terminus: Rho GTPase-activating protein 17 (858 aa).

A BAR domain is found at 14-246 (QTVGRAEKTE…MRAHQDKWAE (233 aa)). Residues 252-442 (TPLEEHLKRS…PIIQHADWFF (191 aa)) form the Rho-GAP domain. Over residues 459 to 475 (TPNSNHSSHTGNDSDSG) the composition is skewed to polar residues. Residues 459 to 482 (TPNSNHSSHTGNDSDSGTLERKRP) form a disordered region. At S484 the chain carries Phosphoserine. The segment at 516 to 823 (RKHISPAFQP…VTDTNSRVSE (308 aa)) is disordered. Positions 543 to 552 (PSQSSRADSN) are enriched in polar residues. Over residues 553–563 (SVGGPVPSSSG) the composition is skewed to low complexity. Residue S575 is modified to Phosphoserine. A compositionally biased stretch (polar residues) spans 592–617 (RNSNQITTVPNQAQTGGNSHQLSVGT). Positions 637 to 650 (APAPPKPGNPPPGH) are enriched in pro residues. The segment covering 653–702 (GQSSPGTGTSPKPSTRSPSPPQQQQQQQQQQQQQQQQQQQQQQQQQQQQQ) has biased composition (low complexity). Residues S710 and S712 each carry the phosphoserine modification. 2 stretches are compositionally biased toward pro residues: residues 716 to 729 (IQAP…PPTQ) and 738 to 756 (EPGP…PPPA). A phosphothreonine mark is found at T742, T746, and T748. Positions 742-755 (TPPQTPTPPSTPPP) match the SH3-binding motif. S751 bears the Phosphoserine mark. T752 is modified (phosphothreonine). Residues 757–769 (KQNSSQSETTQLH) show a composition bias toward polar residues. Over residues 784–794 (RPSVPPPPNPP) the composition is skewed to pro residues. Residues 806–823 (SVPTASRIVTDTNSRVSE) are compositionally biased toward polar residues.

In terms of assembly, component of a complex whose core is composed of ARHGAP17, AMOT, PALS1, PATJ and PARD3/PAR3. Interacts with NHERF1, FNBP1, TRIP10, CAPZA (CAPZA1, CAPZA2 or CAPZA3), CAPZB, CD2AP and SH3KBP1/CIN85. Highly expressed in brain; neuron-specific (at protein level). Isoform 2, isoform 3 and isoform 4 are predominantly expressed in neuronal tissues and correlate well with the differentiation of neurons, while isoform 1 is strongly expressed in embryonic brain.

It localises to the membrane. The protein resides in the cytoplasm. It is found in the cell junction. The protein localises to the tight junction. Rho GTPase-activating protein involved in the maintenance of tight junction by regulating the activity of CDC42, thereby playing a central role in apical polarity of epithelial cells. Specifically acts as a GTPase activator for the CDC42 GTPase by converting it to an inactive GDP-bound state. The complex formed with AMOT acts by regulating the uptake of polarity proteins at tight junctions, possibly by deciding whether tight junction transmembrane proteins are recycled back to the plasma membrane or sent elsewhere. Participates in the Ca(2+)-dependent regulation of exocytosis, possibly by catalyzing GTPase activity of Rho family proteins and by inducing the reorganization of the cortical actin filaments. Acts as a GTPase activator in vitro for RAC1. The polypeptide is Rho GTPase-activating protein 17 (Arhgap17) (Rattus norvegicus (Rat)).